Reading from the N-terminus, the 264-residue chain is uncharacterized protein (264 aa).

Positions 1-16 (MKGKSALTLLLAGIFS) are cleaved as a signal peptide. Residue Cys17 is the site of N-palmitoyl cysteine attachment. Residue Cys17 is the site of S-diacylglycerol cysteine attachment.

Its subcellular location is the cell inner membrane. This is an uncharacterized protein from Escherichia coli (strain K12).